The sequence spans 82 residues: ATP synthase subunit c, chloroplastic (82 aa).

2 helical membrane passes run 3–23 (PIVA…AAIG) and 57–77 (FAFM…LLFA).

It belongs to the ATPase C chain family. As to quaternary structure, F-type ATPases have 2 components, F(1) - the catalytic core - and F(0) - the membrane proton channel. F(1) has five subunits: alpha(3), beta(3), gamma(1), delta(1), epsilon(1). F(0) has four main subunits: a(1), b(1), b'(1) and c(10-14). The alpha and beta chains form an alternating ring which encloses part of the gamma chain. F(1) is attached to F(0) by a central stalk formed by the gamma and epsilon chains, while a peripheral stalk is formed by the delta, b and b' chains.

The protein localises to the plastid. Its subcellular location is the chloroplast thylakoid membrane. Functionally, f(1)F(0) ATP synthase produces ATP from ADP in the presence of a proton or sodium gradient. F-type ATPases consist of two structural domains, F(1) containing the extramembraneous catalytic core and F(0) containing the membrane proton channel, linked together by a central stalk and a peripheral stalk. During catalysis, ATP synthesis in the catalytic domain of F(1) is coupled via a rotary mechanism of the central stalk subunits to proton translocation. Its function is as follows. Key component of the F(0) channel; it plays a direct role in translocation across the membrane. A homomeric c-ring of between 10-14 subunits forms the central stalk rotor element with the F(1) delta and epsilon subunits. The sequence is that of ATP synthase subunit c, chloroplastic from Chlorella vulgaris (Green alga).